Reading from the N-terminus, the 1086-residue chain is Phosphinothricin tripeptide synthetase PhsC (1086 aa).

The tract at residues 22–43 (RLRAAAAPGPDPAIPRRPDDDG) is disordered. A condensation region spans residues 45–484 (VPLSFAQHRL…LAALPVLTRD (440 aa)). The adenylation stretch occupies residues 510–901 (LEDSARRHPD…GRTDHQVKLR (392 aa)). Positions 983–1007 (GKLDREALPDPLAQSGDTAGNRPPL) are disordered. One can recognise a Carrier domain in the interval 1006 to 1081 (PLLDPVEERI…GLARSVSAER (76 aa)). The residue at position 1041 (serine 1041) is an O-(pantetheine 4'-phosphoryl)serine.

Belongs to the NRP synthetase family. Requires pantetheine 4'-phosphate as cofactor.

It catalyses the reaction holo-[peptidyl-carrier protein] + L-alanine + ATP = L-alanyl-[peptidyl-carrier protein] + AMP + diphosphate. The protein operates within secondary metabolite biosynthesis; bialaphos biosynthesis. In terms of biological role, involved in the biosynthesis of phosphinothricin tripeptide (PTT), also known as bialaphos (BA), a natural-product antibiotic and potent herbicide. Adenylates L-alanine and loads it onto a peptidyl carrier domain via a thioester linkage to the phosphopanthetheine moiety. Shows weaker activity with aminobutyric acid and L-serine. This Streptomyces viridochromogenes (strain DSM 40736 / JCM 4977 / BCRC 1201 / Tue 494) protein is Phosphinothricin tripeptide synthetase PhsC.